We begin with the raw amino-acid sequence, 388 residues long: Probable proton-coupled zinc antiporter SLC30A3 (388 aa).

Positions 1–41 (MEPSLATGGSETTRLVSARDRSSAGGGLRLKSLFTEPSEPL) are disordered. The Cytoplasmic segment spans residues 1 to 75 (MEPSLATGGS…SPERVQARRQ (75 aa)). A phosphoserine mark is found at S63 and S66. The helical transmembrane segment at 76–96 (LYAACAVCFIFMAGEVVGGYL) threads the bilayer. At 97-105 (AHSLAIMTD) the chain is on the lumenal side. Residues 106–126 (AAHLLADIGSMLASLFSLWLS) form a helical membrane-spanning segment. H108 and D112 together coordinate Zn(2+). The Cytoplasmic portion of the chain corresponds to 127 to 145 (TRPATRTMTFGWHRSETLG). A helical transmembrane segment spans residues 146-166 (ALASVVSLWIVTGILLYLAFL). Residues 167–177 (RLLHSDYHIEA) are Lumenal-facing. The chain crosses the membrane as a helical span at residues 178-198 (GAMLLTASIAVCANLLMAFVL). Over 199 to 235 (HQTGAPHSHGSTGAEYAPLEEGHGYPMSLGNTSVRAA) the chain is Cytoplasmic. Residues 236–256 (FVHVLGDLLQSFGVLAASILI) traverse the membrane as a helical segment. Zn(2+) contacts are provided by H238 and D242. Residues 257 to 263 (YFKPQYK) lie on the Lumenal side of the membrane. Residues 264-284 (VADPISTFLFSICALGSTAPT) form a helical membrane-spanning segment. The Cytoplasmic portion of the chain corresponds to 285-388 (LRDVLLVLME…CLRCQEPSQA (104 aa)).

It belongs to the cation diffusion facilitator (CDF) transporter (TC 2.A.4) family. SLC30A subfamily. As to quaternary structure, homodimer. Homodimerization is negligible compared to the human protein. It could explain the lower efficiency of zinc transport. Interacts with TMEM163. In terms of tissue distribution, expression is restricted to brain (at protein level). In the brain, most abundant in hippocampus and cerebral cortex. The mRNA is also detected in testis, expression being restricted to germ cells and highest in pachytene spermatocytes and round spermatids.

The protein localises to the cytoplasmic vesicle. The protein resides in the secretory vesicle. It is found in the synaptic vesicle membrane. It localises to the synapse. Its subcellular location is the synaptosome. The protein localises to the late endosome membrane. The protein resides in the lysosome membrane. The catalysed reaction is Zn(2+)(in) + 2 H(+)(out) = Zn(2+)(out) + 2 H(+)(in). Functionally, probable proton-coupled zinc ion antiporter mediating the import of zinc from cytoplasm into synaptic vesicles and participating to cellular zinc ion homeostasis in the brain. The protein is Probable proton-coupled zinc antiporter SLC30A3 of Mus musculus (Mouse).